The chain runs to 506 residues: RNA-splicing ligase RtcB homolog (506 aa).

Residues Asp-120, Cys-123, His-228, His-260, and His-354 each coordinate Mn(2+). 227 to 231 (NHYAE) serves as a coordination point for GMP. GMP contacts are provided by residues 354 to 355 (HN), 403 to 406 (GGSM), Ser-410, 429 to 432 (HGAG), and Lys-505. The active-site GMP-histidine intermediate is the His-429.

Belongs to the RtcB family. Catalytic component of the tRNA-splicing ligase complex. Mn(2+) is required as a cofactor.

The enzyme catalyses a 3'-end 3'-phospho-ribonucleotide-RNA + a 5'-end dephospho-ribonucleoside-RNA + GTP = a ribonucleotidyl-ribonucleotide-RNA + GMP + diphosphate. It carries out the reaction a 3'-end 2',3'-cyclophospho-ribonucleotide-RNA + a 5'-end dephospho-ribonucleoside-RNA + GTP + H2O = a ribonucleotidyl-ribonucleotide-RNA + GMP + diphosphate + H(+). Catalytic subunit of the tRNA-splicing ligase complex that acts by directly joining spliced tRNA halves to mature-sized tRNAs by incorporating the precursor-derived splice junction phosphate into the mature tRNA as a canonical 3',5'-phosphodiester. May act as an RNA ligase with broad substrate specificity, and may function toward other RNAs. This chain is RNA-splicing ligase RtcB homolog, found in Anopheles gambiae (African malaria mosquito).